A 270-amino-acid polypeptide reads, in one-letter code: 1-deoxy-11-beta-hydroxypentalenate dehydrogenase (270 aa).

Glycine 12–aspartate 36 contacts NAD(+). Position 144 (serine 144) interacts with substrate. Tyrosine 157 acts as the Proton acceptor in catalysis. Lysine 161 is an NAD(+) binding site.

It belongs to the short-chain dehydrogenases/reductases (SDR) family.

It carries out the reaction 1-deoxy-11beta-hydroxypentalenate + NAD(+) = 1-deoxy-11-oxopentalenate + NADH + H(+). It functions in the pathway antibiotic biosynthesis; neopentalenolactone biosynthesis. Functionally, catalyzes the oxidation of 1-deoxy-11-beta-hydroxypentalenic acid to 1-deoxy-11-oxopentalenic acid in the biosynthesis of neopentalenolactone antibiotic. This chain is 1-deoxy-11-beta-hydroxypentalenate dehydrogenase (ptlF), found in Streptomyces avermitilis (strain ATCC 31267 / DSM 46492 / JCM 5070 / NBRC 14893 / NCIMB 12804 / NRRL 8165 / MA-4680).